Consider the following 364-residue polypeptide: Ribosomal RNA large subunit methyltransferase F (364 aa).

The tract at residues 1–28 is disordered; it reads MTNKRKSAKPLEPAKRTPKLRTKKSRDL.

This sequence belongs to the methyltransferase superfamily. METTL16/RlmF family.

The protein localises to the cytoplasm. It carries out the reaction adenosine(1618) in 23S rRNA + S-adenosyl-L-methionine = N(6)-methyladenosine(1618) in 23S rRNA + S-adenosyl-L-homocysteine + H(+). Specifically methylates the adenine in position 1618 of 23S rRNA. The sequence is that of Ribosomal RNA large subunit methyltransferase F from Vibrio vulnificus (strain YJ016).